Here is a 505-residue protein sequence, read N- to C-terminus: Maturase K (505 aa).

Belongs to the intron maturase 2 family. MatK subfamily.

The protein resides in the plastid. It is found in the chloroplast. Its function is as follows. Usually encoded in the trnK tRNA gene intron. Probably assists in splicing its own and other chloroplast group II introns. In Barclaya longifolia (Orchid lily), this protein is Maturase K.